Here is a 560-residue protein sequence, read N- to C-terminus: MFS siderochrome iron transporter 1 (560 aa).

An N-linked (GlcNAc...) asparagine glycan is attached at N29. 11 helical membrane-spanning segments follow: residues 53-73 (LWLT…LVSV), 90-110 (LLAS…LTLA), 115-135 (VWGR…ALIM), 146-166 (VAAH…VDVM), 177-194 (MIMF…TFAG), 211-231 (FGAF…IMLF), 264-284 (VVGI…FSIV), 291-311 (WATG…AIFL), 331-351 (PTII…LLTI), 354-374 (AGYV…GIGL), and 379-399 (FKWA…LLIP). The N-linked (GlcNAc...) asparagine glycan is linked to N404. The next 3 helical transmembrane spans lie at 407–427 (IGAV…FSVC), 441–461 (VAVV…VGLA), and 522–542 (VIAG…WRNV).

The protein belongs to the major facilitator superfamily.

It localises to the membrane. Major facilitator transporter involved in siderophore transport. This Ajellomyces capsulatus (Darling's disease fungus) protein is MFS siderochrome iron transporter 1.